Consider the following 304-residue polypeptide: Glutaminase (304 aa).

Positions 63, 113, 157, 164, 188, 240, and 258 each coordinate substrate.

This sequence belongs to the glutaminase family. As to quaternary structure, homotetramer.

It catalyses the reaction L-glutamine + H2O = L-glutamate + NH4(+). In Ralstonia nicotianae (strain ATCC BAA-1114 / GMI1000) (Ralstonia solanacearum), this protein is Glutaminase.